We begin with the raw amino-acid sequence, 364 residues long: DNA polymerase IV (364 aa).

Positions 14 to 198 constitute a UmuC domain; sequence IIHIDMDAFF…LPVEKFHGVG (185 aa). Positions 18 and 116 each coordinate Mg(2+). Residue Glu117 is part of the active site.

The protein belongs to the DNA polymerase type-Y family. As to quaternary structure, monomer. Mg(2+) is required as a cofactor.

It is found in the cytoplasm. The enzyme catalyses DNA(n) + a 2'-deoxyribonucleoside 5'-triphosphate = DNA(n+1) + diphosphate. Functionally, poorly processive, error-prone DNA polymerase involved in untargeted mutagenesis. Copies undamaged DNA at stalled replication forks, which arise in vivo from mismatched or misaligned primer ends. These misaligned primers can be extended by PolIV. Exhibits no 3'-5' exonuclease (proofreading) activity. May be involved in translesional synthesis, in conjunction with the beta clamp from PolIII. The polypeptide is DNA polymerase IV (Lactococcus lactis subsp. cremoris (strain SK11)).